Consider the following 165-residue polypeptide: uncharacterized protein (165 aa).

This is an uncharacterized protein from Aquifex aeolicus (strain VF5).